Consider the following 248-residue polypeptide: MTEATRILLGVNIDHVATLRQARGTRYPDPVKAALDAEEAGADGITVHLREDRRHIQERDVRMLKEVLQTRMNFEMGVTEEMLAFAEEIRPAHSCLVPERREELTTEGGLDVAGQEQRIRDAVRRLAAVGSEVSLFIDPDPRQIEASARVGAPAIELHTGRYADAENPGEQARELQRVREGVALGRSLGLIVNAGHGLHYHNVEPVAAIEGINELNIGHAIVAHALFVGFRQAVAEMKALMLAAAAKR.

N12 is a 3-amino-2-oxopropyl phosphate binding site. 14-15 (DH) is a binding site for 1-deoxy-D-xylulose 5-phosphate. R23 contributes to the 3-amino-2-oxopropyl phosphate binding site. The active-site Proton acceptor is the H48. R50 and H55 together coordinate 1-deoxy-D-xylulose 5-phosphate. E75 (proton acceptor) is an active-site residue. Residue T105 coordinates 1-deoxy-D-xylulose 5-phosphate. H196 acts as the Proton donor in catalysis. 3-amino-2-oxopropyl phosphate contacts are provided by residues G197 and 218–219 (GH).

The protein belongs to the PNP synthase family. In terms of assembly, homooctamer; tetramer of dimers.

The protein resides in the cytoplasm. It carries out the reaction 3-amino-2-oxopropyl phosphate + 1-deoxy-D-xylulose 5-phosphate = pyridoxine 5'-phosphate + phosphate + 2 H2O + H(+). Its pathway is cofactor biosynthesis; pyridoxine 5'-phosphate biosynthesis; pyridoxine 5'-phosphate from D-erythrose 4-phosphate: step 5/5. Catalyzes the complicated ring closure reaction between the two acyclic compounds 1-deoxy-D-xylulose-5-phosphate (DXP) and 3-amino-2-oxopropyl phosphate (1-amino-acetone-3-phosphate or AAP) to form pyridoxine 5'-phosphate (PNP) and inorganic phosphate. The chain is Pyridoxine 5'-phosphate synthase from Pseudomonas paraeruginosa (strain DSM 24068 / PA7) (Pseudomonas aeruginosa (strain PA7)).